A 78-amino-acid polypeptide reads, in one-letter code: Large ribosomal subunit protein bL28 (78 aa).

This sequence belongs to the bacterial ribosomal protein bL28 family.

The chain is Large ribosomal subunit protein bL28 from Glaesserella parasuis serovar 5 (strain SH0165) (Haemophilus parasuis).